Consider the following 543-residue polypeptide: Proline--tRNA ligase, chloroplastic/mitochondrial (543 aa).

The disordered stretch occupies residues 41–63 (ATAPSGTASPETKSSEVDRLRSD). The segment covering 53–63 (KSSEVDRLRSD) has biased composition (basic and acidic residues).

It belongs to the class-II aminoacyl-tRNA synthetase family.

It is found in the plastid. Its subcellular location is the chloroplast. The protein resides in the mitochondrion. The catalysed reaction is tRNA(Pro) + L-proline + ATP = L-prolyl-tRNA(Pro) + AMP + diphosphate. Catalyzes the attachment of proline to tRNA(Pro) in a two-step reaction: proline is first activated by ATP to form Pro-AMP and then transferred to the acceptor end of tRNA(Pro). This chain is Proline--tRNA ligase, chloroplastic/mitochondrial, found in Arabidopsis thaliana (Mouse-ear cress).